The primary structure comprises 162 residues: Probable chemoreceptor glutamine deamidase CheD (162 aa).

It belongs to the CheD family.

The catalysed reaction is L-glutaminyl-[protein] + H2O = L-glutamyl-[protein] + NH4(+). Functionally, probably deamidates glutamine residues to glutamate on methyl-accepting chemotaxis receptors (MCPs), playing an important role in chemotaxis. In Clostridium novyi (strain NT), this protein is Probable chemoreceptor glutamine deamidase CheD.